The chain runs to 590 residues: G protein-coupled receptor kinase 5 (590 aa).

The segment at 1–185 is N-terminal; it reads MELENIVANT…LERQPVTKNT (185 aa). Residues 20-39 are interaction with calmodulin; sequence GGKRKGKSKKWKEILKFPHI. The 119-residue stretch at 53 to 171 folds into the RGS domain; the sequence is YCSLCDKQPI…LDSMFFDRFL (119 aa). A Protein kinase domain is found at 186-448; the sequence is FRQYRVLGKG…AAEVKRHPFF (263 aa). Residues 192–200 and lysine 215 contribute to the ATP site; that span reads LGKGGFGEV. Aspartate 311 (proton acceptor) is an active-site residue. A Nuclear localization signal motif is present at residues 388–395; that stretch reads RKEKVKRE. An AGC-kinase C-terminal domain is found at 449–514; it reads RNMNFKRLEA…GSVSIPWQNE (66 aa). A Phosphoserine; by autocatalysis modification is found at serine 484. Threonine 485 carries the phosphothreonine; by autocatalysis modification. Residues 531-590 form a disordered region; the sequence is GTLPPDLNRNHPPEPPKKGLLQRLFKRQHQNNSKSSPSSKTSFNHHINSNHVSSNSTGSS. Basic and acidic residues predominate over residues 538–547; it reads NRNHPPEPPK. Residues 546–565 form a sufficient for membrane localization region; it reads PKKGLLQRLFKRQHQNNSKS. Residues 563–590 show a composition bias toward low complexity; it reads SKSSPSSKTSFNHHINSNHVSSNSTGSS. Serine 579 is modified (phosphoserine).

Belongs to the protein kinase superfamily. AGC Ser/Thr protein kinase family. GPRK subfamily. As to quaternary structure, interacts with ST13 (via the C-terminus 303-319 AA). Interacts with TP53/p53. Interacts with HTR4 (via C-terminus 330-346 AA); this interaction is promoted by 5-HT (serotonin). Interacts with HDAC5. Interacts with GIT1. In terms of processing, autophosphorylated. Autophosphorylation may play a critical role in the regulation of GRK5 kinase activity. In terms of tissue distribution, highest levels in heart, placenta, lung &gt; skeletal muscle &gt; brain, liver, pancreas &gt; kidney.

The protein localises to the cytoplasm. It is found in the nucleus. It localises to the cell membrane. The catalysed reaction is [G-protein-coupled receptor] + ATP = [G-protein-coupled receptor]-phosphate + ADP + H(+). Inhibited by calmodulin with an IC(50) of 50 nM. Calmodulin inhibits GRK5 association with receptor and phospholipid. Its function is as follows. Serine/threonine kinase that phosphorylates preferentially the activated forms of a variety of G-protein-coupled receptors (GPCRs). Such receptor phosphorylation initiates beta-arrestin-mediated receptor desensitization, internalization, and signaling events leading to their down-regulation. Phosphorylates a variety of GPCRs, including adrenergic receptors, muscarinic acetylcholine receptors (more specifically Gi-coupled M2/M4 subtypes), dopamine receptors and opioid receptors. In addition to GPCRs, also phosphorylates various substrates: Hsc70-interacting protein/ST13, TP53/p53, HDAC5, and arrestin-1/ARRB1. Phosphorylation of ARRB1 by GRK5 inhibits G-protein independent MAPK1/MAPK3 signaling downstream of 5HT4-receptors. Phosphorylation of HDAC5, a repressor of myocyte enhancer factor 2 (MEF2) leading to nuclear export of HDAC5 and allowing MEF2-mediated transcription. Phosphorylation of TP53/p53, a crucial tumor suppressor, inhibits TP53/p53-mediated apoptosis. Phosphorylation of ST13 regulates internalization of the chemokine receptor. Phosphorylates rhodopsin (RHO) (in vitro) and a non G-protein-coupled receptor, LRP6 during Wnt signaling (in vitro). The polypeptide is G protein-coupled receptor kinase 5 (GRK5) (Homo sapiens (Human)).